Here is a 793-residue protein sequence, read N- to C-terminus: Probable phosphoketolase 2 (793 aa).

It belongs to the XFP family. Requires thiamine diphosphate as cofactor.

The chain is Probable phosphoketolase 2 from Nostoc sp. (strain PCC 7120 / SAG 25.82 / UTEX 2576).